A 647-amino-acid polypeptide reads, in one-letter code: Threonine--tRNA ligase (647 aa).

One can recognise a TGS domain in the interval M1–T63. The segment at D242 to P540 is catalytic. Zn(2+) contacts are provided by C336, H387, and H517.

It belongs to the class-II aminoacyl-tRNA synthetase family. In terms of assembly, homodimer. It depends on Zn(2+) as a cofactor.

Its subcellular location is the cytoplasm. The catalysed reaction is tRNA(Thr) + L-threonine + ATP = L-threonyl-tRNA(Thr) + AMP + diphosphate + H(+). Catalyzes the attachment of threonine to tRNA(Thr) in a two-step reaction: L-threonine is first activated by ATP to form Thr-AMP and then transferred to the acceptor end of tRNA(Thr). Also edits incorrectly charged L-seryl-tRNA(Thr). The polypeptide is Threonine--tRNA ligase (Staphylococcus carnosus (strain TM300)).